The chain runs to 218 residues: Nuclear import protein MOG1 (218 aa).

The protein belongs to the MOG1 family. As to quaternary structure, interacts with GSP1.

The protein resides in the nucleus. Its function is as follows. Involved in the Ran-GTPase system for nuclear protein import and poly(A)+ mRNA export. The protein is Nuclear import protein MOG1 (MOG1) of Saccharomyces cerevisiae (strain ATCC 204508 / S288c) (Baker's yeast).